A 1028-amino-acid polypeptide reads, in one-letter code: Contactin-6 (1028 aa).

Residues 1–19 form the signal peptide; the sequence is MRLLWKLVILLPLINSCAG. 6 consecutive Ig-like C2-type domains span residues 32 to 117, 122 to 208, 227 to 308, 318 to 402, 408 to 502, and 500 to 587; these read PQDV…AKLQ, EDFE…RSVQ, PKIE…RNLA, PEWE…AELR, PDFS…RTII, and TIIT…ERLS. 6 disulfides stabilise this stretch: cysteine 50/cysteine 100, cysteine 144/cysteine 196, cysteine 249/cysteine 297, cysteine 339/cysteine 386, cysteine 431/cysteine 479, and cysteine 521/cysteine 577. N-linked (GlcNAc...) asparagine glycosylation is found at asparagine 65 and asparagine 193. N-linked (GlcNAc...) asparagine glycosylation is found at asparagine 368, asparagine 377, and asparagine 468. 4 Fibronectin type-III domains span residues 600–698, 703–800, 805–901, and 902–996; these read PPED…TKAS, APGN…SGED, APRG…TKKS, and PPSQ…KMSS. Asparagine 659, asparagine 765, asparagine 860, and asparagine 865 each carry an N-linked (GlcNAc...) asparagine glycan. Tyrosine 882 bears the Phosphotyrosine mark. N-linked (GlcNAc...) asparagine glycans are attached at residues asparagine 895, asparagine 931, asparagine 956, and asparagine 957. Residue serine 999 is the site of GPI-anchor amidated serine attachment. Positions 1000–1028 are cleaved as a propeptide — removed in mature form; sequence TGVQISKPSTQSLSMVGVFYCFAIHPLSR.

The protein belongs to the immunoglobulin superfamily. Contactin family. As to quaternary structure, interacts with PTPRG. As to expression, expressed in brain. In brain, it is preferentially expressed in the accessory olfactory bulb, layers II/III and V of the cerebral cortex, piriform cortex, anterior thalamic nuclei, locus coeruleus of the pons and mesencephalic trigeminal nucleus and in Purkinje cells of the cerebellum.

Its subcellular location is the cell membrane. Functionally, contactins mediate cell surface interactions during nervous system development. Participates in oligodendrocytes generation by acting as a ligand of NOTCH1. Its association with NOTCH1 promotes NOTCH1 activation through the released notch intracellular domain (NICD) and subsequent translocation to the nucleus. Involved in motor coordination. This is Contactin-6 (Cntn6) from Mus musculus (Mouse).